We begin with the raw amino-acid sequence, 46 residues long: Protein krueppel (46 aa).

3 consecutive C2H2-type zinc fingers follow at residues 1–4 (MRLH), 10–32 (YQCLHCDRHFVQVANLRRHLRVH), and 38–46 (YACEICPSR).

The protein belongs to the krueppel C2H2-type zinc-finger protein family.

The protein localises to the nucleus. Its function is as follows. Krueppel is a gap class segmentation protein. The protein is Protein krueppel (Kr) of Pholcus phalangioides (Longbodied cellar spider).